We begin with the raw amino-acid sequence, 189 residues long: GMP synthase [glutamine-hydrolyzing] subunit A (189 aa).

Residues lysine 5 to tyrosine 189 form the Glutamine amidotransferase type-1 domain. The active-site Nucleophile is the cysteine 79. Catalysis depends on residues histidine 166 and glutamate 168.

Heterodimer composed of a glutamine amidotransferase subunit (A) and a GMP-binding subunit (B).

The catalysed reaction is XMP + L-glutamine + ATP + H2O = GMP + L-glutamate + AMP + diphosphate + 2 H(+). The protein operates within purine metabolism; GMP biosynthesis; GMP from XMP (L-Gln route): step 1/1. In terms of biological role, catalyzes the synthesis of GMP from XMP. The chain is GMP synthase [glutamine-hydrolyzing] subunit A from Methanosarcina mazei (strain ATCC BAA-159 / DSM 3647 / Goe1 / Go1 / JCM 11833 / OCM 88) (Methanosarcina frisia).